We begin with the raw amino-acid sequence, 641 residues long: Fructose-1,6-bisphosphatase class 3 (641 aa).

This sequence belongs to the FBPase class 3 family. Requires Mn(2+) as cofactor.

The enzyme catalyses beta-D-fructose 1,6-bisphosphate + H2O = beta-D-fructose 6-phosphate + phosphate. Its pathway is carbohydrate biosynthesis; gluconeogenesis. In Latilactobacillus sakei subsp. sakei (strain 23K) (Lactobacillus sakei subsp. sakei), this protein is Fructose-1,6-bisphosphatase class 3.